The primary structure comprises 172 residues: Adenine phosphoribosyltransferase (172 aa).

The protein belongs to the purine/pyrimidine phosphoribosyltransferase family. Homodimer.

It is found in the cytoplasm. It carries out the reaction AMP + diphosphate = 5-phospho-alpha-D-ribose 1-diphosphate + adenine. It participates in purine metabolism; AMP biosynthesis via salvage pathway; AMP from adenine: step 1/1. In terms of biological role, catalyzes a salvage reaction resulting in the formation of AMP, that is energically less costly than de novo synthesis. The sequence is that of Adenine phosphoribosyltransferase from Streptococcus thermophilus (strain ATCC BAA-250 / LMG 18311).